The sequence spans 158 residues: MTWITPKKAIMLAAAAEGGTKLNAFDNALLKMGIGNVNLVKLSSVIPAHIEWLDELPKNIPIGMLLPTVYAHIESDEPGSTISAALGVGISEGNEGGLIYEYAGYCKREEAEDMVRKMVEEGFKVRGWKLKEFKVVSAEITVKEKPAAAVAAVIMFPY.

Pyruvic acid (Ser) is present on S44.

This sequence belongs to the PdaD family. It depends on pyruvate as a cofactor.

It carries out the reaction L-arginine + H(+) = agmatine + CO2. This Pyrococcus horikoshii (strain ATCC 700860 / DSM 12428 / JCM 9974 / NBRC 100139 / OT-3) protein is Pyruvoyl-dependent arginine decarboxylase.